We begin with the raw amino-acid sequence, 251 residues long: CDP-diacylglycerol pyrophosphatase (251 aa).

The chain crosses the membrane as a helical span at residues 4–24 (AGLLFLVMIVIAVVATGIGYW).

It belongs to the Cdh family.

It localises to the cell inner membrane. It catalyses the reaction a CDP-1,2-diacyl-sn-glycerol + H2O = a 1,2-diacyl-sn-glycero-3-phosphate + CMP + 2 H(+). It participates in phospholipid metabolism; CDP-diacylglycerol degradation; phosphatidate from CDP-diacylglycerol: step 1/1. The protein is CDP-diacylglycerol pyrophosphatase of Escherichia coli O45:K1 (strain S88 / ExPEC).